We begin with the raw amino-acid sequence, 85 residues long: Exodeoxyribonuclease 7 small subunit (85 aa).

This sequence belongs to the XseB family. Heterooligomer composed of large and small subunits.

Its subcellular location is the cytoplasm. It carries out the reaction Exonucleolytic cleavage in either 5'- to 3'- or 3'- to 5'-direction to yield nucleoside 5'-phosphates.. Functionally, bidirectionally degrades single-stranded DNA into large acid-insoluble oligonucleotides, which are then degraded further into small acid-soluble oligonucleotides. This chain is Exodeoxyribonuclease 7 small subunit, found in Alkalilimnicola ehrlichii (strain ATCC BAA-1101 / DSM 17681 / MLHE-1).